The chain runs to 873 residues: DNA mismatch repair protein MutS (873 aa).

625 to 632 provides a ligand contact to ATP; that stretch reads GPNMGGKS.

Belongs to the DNA mismatch repair MutS family.

In terms of biological role, this protein is involved in the repair of mismatches in DNA. It is possible that it carries out the mismatch recognition step. This protein has a weak ATPase activity. The polypeptide is DNA mismatch repair protein MutS (Xanthomonas oryzae pv. oryzae (strain KACC10331 / KXO85)).